The sequence spans 208 residues: Uracil phosphoribosyltransferase (208 aa).

5-phospho-alpha-D-ribose 1-diphosphate contacts are provided by residues Arg-78, Arg-103, and 130-138 (DPMLATGGS). Uracil contacts are provided by residues Ile-193 and 198 to 200 (GDA). Residue Asp-199 participates in 5-phospho-alpha-D-ribose 1-diphosphate binding.

Belongs to the UPRTase family. Mg(2+) serves as cofactor.

It catalyses the reaction UMP + diphosphate = 5-phospho-alpha-D-ribose 1-diphosphate + uracil. It functions in the pathway pyrimidine metabolism; UMP biosynthesis via salvage pathway; UMP from uracil: step 1/1. With respect to regulation, allosterically activated by GTP. Functionally, catalyzes the conversion of uracil and 5-phospho-alpha-D-ribose 1-diphosphate (PRPP) to UMP and diphosphate. This Neisseria meningitidis serogroup A / serotype 4A (strain DSM 15465 / Z2491) protein is Uracil phosphoribosyltransferase.